A 336-amino-acid polypeptide reads, in one-letter code: Thiamine thiazole synthase (336 aa).

Substrate is bound by residues A89, 110 to 111 (ES), G118, and C183. C219 is subject to 2,3-didehydroalanine (Cys). Residues D221, H236, M288, and 298–300 (RMG) each bind substrate.

Belongs to the THI4 family. Homooctamer. Requires Fe cation as cofactor. During the catalytic reaction, a sulfide is transferred from Cys-219 to a reaction intermediate, generating a dehydroalanine residue.

It is found in the cytoplasm. The protein resides in the nucleus. It catalyses the reaction [ADP-thiazole synthase]-L-cysteine + glycine + NAD(+) = [ADP-thiazole synthase]-dehydroalanine + ADP-5-ethyl-4-methylthiazole-2-carboxylate + nicotinamide + 3 H2O + 2 H(+). Involved in biosynthesis of the thiamine precursor thiazole. Catalyzes the conversion of NAD and glycine to adenosine diphosphate 5-(2-hydroxyethyl)-4-methylthiazole-2-carboxylic acid (ADT), an adenylated thiazole intermediate. The reaction includes an iron-dependent sulfide transfer from a conserved cysteine residue of the protein to a thiazole intermediate. The enzyme can only undergo a single turnover, which suggests it is a suicide enzyme. May have additional roles in adaptation to various stress conditions and in DNA damage tolerance. The polypeptide is Thiamine thiazole synthase (Puccinia graminis f. sp. tritici (strain CRL 75-36-700-3 / race SCCL) (Black stem rust fungus)).